Reading from the N-terminus, the 430-residue chain is tRNA-2-methylthio-N(6)-dimethylallyladenosine synthase (430 aa).

Residues Lys2–Asn111 form the MTTase N-terminal domain. The [4Fe-4S] cluster site is built by Cys11, Cys47, Cys76, Cys147, Cys151, and Cys154. The region spanning Arg133 to Gln364 is the Radical SAM core domain. The TRAM domain occupies Glu367–Lys428.

The protein belongs to the methylthiotransferase family. MiaB subfamily. Monomer. [4Fe-4S] cluster is required as a cofactor.

Its subcellular location is the cytoplasm. The catalysed reaction is N(6)-dimethylallyladenosine(37) in tRNA + (sulfur carrier)-SH + AH2 + 2 S-adenosyl-L-methionine = 2-methylsulfanyl-N(6)-dimethylallyladenosine(37) in tRNA + (sulfur carrier)-H + 5'-deoxyadenosine + L-methionine + A + S-adenosyl-L-homocysteine + 2 H(+). Functionally, catalyzes the methylthiolation of N6-(dimethylallyl)adenosine (i(6)A), leading to the formation of 2-methylthio-N6-(dimethylallyl)adenosine (ms(2)i(6)A) at position 37 in tRNAs that read codons beginning with uridine. The protein is tRNA-2-methylthio-N(6)-dimethylallyladenosine synthase of Thermosipho melanesiensis (strain DSM 12029 / CIP 104789 / BI429).